Here is a 93-residue protein sequence, read N- to C-terminus: Putative regulatory protein Cthe_1316 (93 aa).

The tract at residues 74–93 (RLNTKEAEDVEVDDEEEIDE) is disordered. Residues 81–93 (EDVEVDDEEEIDE) are compositionally biased toward acidic residues.

Belongs to the RemA family.

In Acetivibrio thermocellus (strain ATCC 27405 / DSM 1237 / JCM 9322 / NBRC 103400 / NCIMB 10682 / NRRL B-4536 / VPI 7372) (Clostridium thermocellum), this protein is Putative regulatory protein Cthe_1316.